Reading from the N-terminus, the 257-residue chain is Protein patched homolog 1 (257 aa).

The Extracellular segment spans residues 1 to 199 (AKLQTGTAYL…LDDILKSFSD (199 aa)). Residues N75, N114, and N177 are each glycosylated (N-linked (GlcNAc...) asparagine). Residues 200-220 (ISVIRVASGYLLMLAYACLTM) traverse the membrane as a helical segment. One can recognise an SSD domain in the interval 201 to 257 (SVIRVASGYLLMLAYACLTMLRWDCAKSQGAVGLAGVLLVALSVAAGLGLCSLIGIS). The Cytoplasmic segment spans residues 221–235 (LRWDCAKSQGAVGLA). The chain crosses the membrane as a helical span at residues 236–256 (GVLLVALSVAAGLGLCSLIGI).

It belongs to the patched family. Post-translationally, glycosylation is necessary for SHH binding. As to expression, in the eye, detected in neural retina, iris, retinal pigment epithelium, but not in lens.

It is found in the membrane. Functionally, acts as a receptor for sonic hedgehog (SHH), indian hedgehog (IHH) and desert hedgehog (DHH). Associates with the smoothened protein (SMO) to transduce the hedgehog's proteins signal. The protein is Protein patched homolog 1 (PTC1) of Cynops pyrrhogaster (Japanese fire-bellied newt).